The sequence spans 405 residues: Phosphopentomutase (405 aa).

The Mn(2+) site is built by Asp10, Asp303, His308, Asp344, His345, and His356.

The protein belongs to the phosphopentomutase family. It depends on Mn(2+) as a cofactor.

Its subcellular location is the cytoplasm. It carries out the reaction 2-deoxy-alpha-D-ribose 1-phosphate = 2-deoxy-D-ribose 5-phosphate. The catalysed reaction is alpha-D-ribose 1-phosphate = D-ribose 5-phosphate. It functions in the pathway carbohydrate degradation; 2-deoxy-D-ribose 1-phosphate degradation; D-glyceraldehyde 3-phosphate and acetaldehyde from 2-deoxy-alpha-D-ribose 1-phosphate: step 1/2. In terms of biological role, isomerase that catalyzes the conversion of deoxy-ribose 1-phosphate (dRib-1-P) and ribose 1-phosphate (Rib-1-P) to deoxy-ribose 5-phosphate (dRib-5-P) and ribose 5-phosphate (Rib-5-P), respectively. The sequence is that of Phosphopentomutase from Shewanella denitrificans (strain OS217 / ATCC BAA-1090 / DSM 15013).